The sequence spans 497 residues: Bifunctional protein GlmU (497 aa).

Residues methionine 1–arginine 252 form a pyrophosphorylase region. UDP-N-acetyl-alpha-D-glucosamine-binding positions include leucine 14–glycine 17, lysine 28, glutamine 86, glycine 91–threonine 92, tyrosine 115–aspartate 117, glycine 154, glutamate 169, asparagine 192, and asparagine 250. A Mg(2+)-binding site is contributed by aspartate 117. Position 250 (asparagine 250) interacts with Mg(2+). A linker region spans residues arginine 253 to glutamate 273. An N-acetyltransferase region spans residues glycine 274–glycine 497. Residues arginine 355 and lysine 373 each coordinate UDP-N-acetyl-alpha-D-glucosamine. Histidine 385 functions as the Proton acceptor in the catalytic mechanism. 2 residues coordinate UDP-N-acetyl-alpha-D-glucosamine: tyrosine 388 and asparagine 399. Residues asparagine 408 to tyrosine 409, serine 427, and alanine 445 contribute to the acetyl-CoA site. Positions proline 473–glycine 497 are disordered. Residues serine 480–alanine 490 show a composition bias toward low complexity.

It in the N-terminal section; belongs to the N-acetylglucosamine-1-phosphate uridyltransferase family. In the C-terminal section; belongs to the transferase hexapeptide repeat family. As to quaternary structure, homotrimer. Requires Mg(2+) as cofactor.

The protein localises to the cytoplasm. It catalyses the reaction alpha-D-glucosamine 1-phosphate + acetyl-CoA = N-acetyl-alpha-D-glucosamine 1-phosphate + CoA + H(+). It carries out the reaction N-acetyl-alpha-D-glucosamine 1-phosphate + UTP + H(+) = UDP-N-acetyl-alpha-D-glucosamine + diphosphate. The protein operates within nucleotide-sugar biosynthesis; UDP-N-acetyl-alpha-D-glucosamine biosynthesis; N-acetyl-alpha-D-glucosamine 1-phosphate from alpha-D-glucosamine 6-phosphate (route II): step 2/2. Its pathway is nucleotide-sugar biosynthesis; UDP-N-acetyl-alpha-D-glucosamine biosynthesis; UDP-N-acetyl-alpha-D-glucosamine from N-acetyl-alpha-D-glucosamine 1-phosphate: step 1/1. It functions in the pathway bacterial outer membrane biogenesis; LPS lipid A biosynthesis. Functionally, catalyzes the last two sequential reactions in the de novo biosynthetic pathway for UDP-N-acetylglucosamine (UDP-GlcNAc). The C-terminal domain catalyzes the transfer of acetyl group from acetyl coenzyme A to glucosamine-1-phosphate (GlcN-1-P) to produce N-acetylglucosamine-1-phosphate (GlcNAc-1-P), which is converted into UDP-GlcNAc by the transfer of uridine 5-monophosphate (from uridine 5-triphosphate), a reaction catalyzed by the N-terminal domain. This is Bifunctional protein GlmU from Micrococcus luteus (strain ATCC 4698 / DSM 20030 / JCM 1464 / CCM 169 / CCUG 5858 / IAM 1056 / NBRC 3333 / NCIMB 9278 / NCTC 2665 / VKM Ac-2230) (Micrococcus lysodeikticus).